A 159-amino-acid polypeptide reads, in one-letter code: Cell division protein SepF (159 aa).

The segment at 23–69 (DYIEEDEEQKPASKSAFDSDHTVTPLASTTAPAASSTTKPFPGGRVN) is disordered. Positions 44–64 (TVTPLASTTAPAASSTTKPFP) are enriched in low complexity.

It belongs to the SepF family. In terms of assembly, homodimer. Interacts with FtsZ.

The protein resides in the cytoplasm. Its function is as follows. Cell division protein that is part of the divisome complex and is recruited early to the Z-ring. Probably stimulates Z-ring formation, perhaps through the cross-linking of FtsZ protofilaments. Its function overlaps with FtsA. The sequence is that of Cell division protein SepF from Bifidobacterium longum (strain DJO10A).